The primary structure comprises 63 residues: Large ribosomal subunit protein uL29 (63 aa).

It belongs to the universal ribosomal protein uL29 family.

This chain is Large ribosomal subunit protein uL29, found in Hahella chejuensis (strain KCTC 2396).